The following is a 332-amino-acid chain: uncharacterized protein (332 aa).

Residues 306-332 (EKNTSEVTEPKTGPSGTKDNYHLHSIF) form a disordered region.

This is an uncharacterized protein from Homo sapiens (Human).